The following is a 491-amino-acid chain: Angiopoietin-related protein 1 (491 aa).

An N-terminal signal peptide occupies residues M1–G23. The stretch at I80 to M168 forms a coiled coil. N160 and N188 each carry an N-linked (GlcNAc...) asparagine glycan. The Fibrinogen C-terminal domain maps to F271–D491. 2 cysteine pairs are disulfide-bonded: C280/C309 and C432/C445.

Its subcellular location is the secreted. The protein is Angiopoietin-related protein 1 (ANGPTL1) of Bos taurus (Bovine).